Consider the following 357-residue polypeptide: Histidine biosynthesis bifunctional protein HisB (357 aa).

Positions 1 to 168 are histidinol-phosphatase; it reads MSEKVLFIDR…IVFKLTKKHD (168 aa). Catalysis depends on aspartate 9, which acts as the Nucleophile. The Mg(2+) site is built by aspartate 9 and aspartate 11. Aspartate 11 serves as the catalytic Proton donor. The Zn(2+) site is built by cysteine 93, histidine 95, cysteine 101, and cysteine 103. Aspartate 130 provides a ligand contact to Mg(2+). The interval 169–357 is imidazoleglycerol-phosphate dehydratase; the sequence is RHAKVVRNTK…KNLPSSKGLL (189 aa).

The protein in the N-terminal section; belongs to the histidinol-phosphatase family. It in the C-terminal section; belongs to the imidazoleglycerol-phosphate dehydratase family. The cofactor is Mg(2+). Zn(2+) is required as a cofactor.

Its subcellular location is the cytoplasm. The catalysed reaction is D-erythro-1-(imidazol-4-yl)glycerol 3-phosphate = 3-(imidazol-4-yl)-2-oxopropyl phosphate + H2O. It catalyses the reaction L-histidinol phosphate + H2O = L-histidinol + phosphate. The protein operates within amino-acid biosynthesis; L-histidine biosynthesis; L-histidine from 5-phospho-alpha-D-ribose 1-diphosphate: step 6/9. It functions in the pathway amino-acid biosynthesis; L-histidine biosynthesis; L-histidine from 5-phospho-alpha-D-ribose 1-diphosphate: step 8/9. This chain is Histidine biosynthesis bifunctional protein HisB, found in Buchnera aphidicola subsp. Baizongia pistaciae (strain Bp).